The sequence spans 496 residues: Probable CtpA-like serine protease (496 aa).

A compositionally biased stretch (basic and acidic residues) spans 1–16; sequence MDDKQHTSSSDDERAE. The interval 1-27 is disordered; sequence MDDKQHTSSSDDERAEIATSNQDQETN. Over residues 18–27 the composition is skewed to polar residues; the sequence is ATSNQDQETN. The chain crosses the membrane as a helical span at residues 39–59; sequence FISILIGTILITAVITVVAYI. The PDZ domain occupies 124–206; the sequence is TKSFNEGVSG…TEVTLTVQRG (83 aa). Active-site charge relay system residues include Ser329, Asp340, and Lys354.

This sequence belongs to the peptidase S41A family.

The protein resides in the cell membrane. In Staphylococcus aureus (strain COL), this protein is Probable CtpA-like serine protease.